A 548-amino-acid polypeptide reads, in one-letter code: Chaperonin GroEL (548 aa).

ATP is bound by residues 30 to 33, K51, 87 to 91, G415, 479 to 481, and D495; these read TLGP, DGTTT, and NAA.

This sequence belongs to the chaperonin (HSP60) family. In terms of assembly, forms a cylinder of 14 subunits composed of two heptameric rings stacked back-to-back. Interacts with the co-chaperonin GroES.

The protein resides in the cytoplasm. The catalysed reaction is ATP + H2O + a folded polypeptide = ADP + phosphate + an unfolded polypeptide.. In terms of biological role, together with its co-chaperonin GroES, plays an essential role in assisting protein folding. The GroEL-GroES system forms a nano-cage that allows encapsulation of the non-native substrate proteins and provides a physical environment optimized to promote and accelerate protein folding. This Oleidesulfovibrio alaskensis (strain ATCC BAA-1058 / DSM 17464 / G20) (Desulfovibrio alaskensis) protein is Chaperonin GroEL.